A 211-amino-acid polypeptide reads, in one-letter code: Redox-sensing transcriptional repressor Rex (211 aa).

The segment at residues 17-56 (LYYRLVSILKGKGIDRVNSKTISEALQIDSATIRRDFSYF) is a DNA-binding region (H-T-H motif). Position 91–96 (91–96 (GIGNLG)) interacts with NAD(+).

It belongs to the transcriptional regulatory Rex family. In terms of assembly, homodimer.

Its subcellular location is the cytoplasm. In terms of biological role, modulates transcription in response to changes in cellular NADH/NAD(+) redox state. This chain is Redox-sensing transcriptional repressor Rex, found in Staphylococcus epidermidis (strain ATCC 12228 / FDA PCI 1200).